We begin with the raw amino-acid sequence, 458 residues long: Putative long chain fatty acid-CoA ligase VraA (458 aa).

Belongs to the ATP-dependent AMP-binding enzyme family.

The protein is Putative long chain fatty acid-CoA ligase VraA (vraA) of Staphylococcus aureus (strain Mu3 / ATCC 700698).